Consider the following 289-residue polypeptide: 4-hydroxy-tetrahydrodipicolinate synthase (289 aa).

Residue Thr43 coordinates pyruvate. Tyr131 (proton donor/acceptor) is an active-site residue. Lys160 acts as the Schiff-base intermediate with substrate in catalysis. Residue Ile200 participates in pyruvate binding.

It belongs to the DapA family. In terms of assembly, homotetramer; dimer of dimers.

Its subcellular location is the cytoplasm. It carries out the reaction L-aspartate 4-semialdehyde + pyruvate = (2S,4S)-4-hydroxy-2,3,4,5-tetrahydrodipicolinate + H2O + H(+). It participates in amino-acid biosynthesis; L-lysine biosynthesis via DAP pathway; (S)-tetrahydrodipicolinate from L-aspartate: step 3/4. Functionally, catalyzes the condensation of (S)-aspartate-beta-semialdehyde [(S)-ASA] and pyruvate to 4-hydroxy-tetrahydrodipicolinate (HTPA). In Methanococcus vannielii (strain ATCC 35089 / DSM 1224 / JCM 13029 / OCM 148 / SB), this protein is 4-hydroxy-tetrahydrodipicolinate synthase.